Reading from the N-terminus, the 339-residue chain is DNA-directed RNA polymerase subunit alpha (339 aa).

An alpha N-terminal domain (alpha-NTD) region spans residues 1–233 (MVREEVAGST…DLFLPFLHAE (233 aa)). The interval 266–339 (GIPLNCIFID…MDLLKNKLSF (74 aa)) is alpha C-terminal domain (alpha-CTD).

This sequence belongs to the RNA polymerase alpha chain family. In plastids the minimal PEP RNA polymerase catalytic core is composed of four subunits: alpha, beta, beta', and beta''. When a (nuclear-encoded) sigma factor is associated with the core the holoenzyme is formed, which can initiate transcription.

The protein resides in the plastid. It is found in the chloroplast. It catalyses the reaction RNA(n) + a ribonucleoside 5'-triphosphate = RNA(n+1) + diphosphate. In terms of biological role, DNA-dependent RNA polymerase catalyzes the transcription of DNA into RNA using the four ribonucleoside triphosphates as substrates. This is DNA-directed RNA polymerase subunit alpha from Agrostis stolonifera (Creeping bentgrass).